A 175-amino-acid chain; its full sequence is 3-hydroxyanthranilate 3,4-dioxygenase (175 aa).

Residue Arg-45 participates in O2 binding. Fe cation contacts are provided by His-49, Glu-55, and His-93. Glu-55 provides a ligand contact to substrate. Substrate contacts are provided by Arg-97 and Glu-107. A divalent metal cation-binding residues include Cys-122, Cys-125, Cys-159, and Cys-162.

It belongs to the 3-HAO family. Fe(2+) is required as a cofactor.

It localises to the cytoplasm. The catalysed reaction is 3-hydroxyanthranilate + O2 = (2Z,4Z)-2-amino-3-carboxymuconate 6-semialdehyde. Its pathway is cofactor biosynthesis; NAD(+) biosynthesis; quinolinate from L-kynurenine: step 3/3. In terms of biological role, catalyzes the oxidative ring opening of 3-hydroxyanthranilate to 2-amino-3-carboxymuconate semialdehyde, which spontaneously cyclizes to quinolinate. In Lodderomyces elongisporus (strain ATCC 11503 / CBS 2605 / JCM 1781 / NBRC 1676 / NRRL YB-4239) (Yeast), this protein is 3-hydroxyanthranilate 3,4-dioxygenase.